A 183-amino-acid chain; its full sequence is Pentapeptide repeat protein MfpA (183 aa).

The region spanning 113–147 (SLVDTDLRKCVLRGADLSGARTTGARLDDADLRGA) is the Pentapeptide repeat domain.

It belongs to the pentapeptide repeat protein family. As to quaternary structure, homodimer. Probably interacts with DNA gyrase.

Its function is as follows. Might be involved in fluoroquinolone resistance. Inhibits ATP-independent DNA relaxation, ATP-dependent DNA supercoiling and ATP-dependent decatenation by endogenous gyrase, 50% inhibition occurs at 2 uM; inhibition is abolished if GyrA is mutated (Asp-87 to Gly or His). Also inhibits fluoroquinolone-promoted dsDNA cleavage. Increases fluoroquinolone (ciprofloxacin or moxifloxacin) inhibition of gyrase supercoiling activity in a concentration-dependent manner. Inhibits DNA relaxation and supercoiling by E.coli gyrase. Forms a structure that exhibits size, shape and electrostatic similarity to B-form DNA; it may bind to DNA gyrase which is postulated to protect it from fluoroquinolones. This is Pentapeptide repeat protein MfpA from Mycobacterium tuberculosis (strain ATCC 25618 / H37Rv).